The sequence spans 156 residues: Cytochrome c-type biogenesis protein CcmE (156 aa).

The Cytoplasmic segment spans residues 1–8 (MNPLRRKR). Residues 9-29 (LLIILAILAGVGIAVGLAMSA) traverse the membrane as a helical; Signal-anchor for type II membrane protein segment. Residues 30-156 (LRENINLFYT…RIRSLPRRAK (127 aa)) are Periplasmic-facing. Heme contacts are provided by H124 and Y128.

This sequence belongs to the CcmE/CycJ family.

The protein localises to the cell inner membrane. Its function is as follows. Heme chaperone required for the biogenesis of c-type cytochromes. Transiently binds heme delivered by CcmC and transfers the heme to apo-cytochromes in a process facilitated by CcmF and CcmH. This is Cytochrome c-type biogenesis protein CcmE from Pseudomonas fluorescens.